Here is a 442-residue protein sequence, read N- to C-terminus: DMATS-type prenyltransferase mfmD (442 aa).

It belongs to the tryptophan dimethylallyltransferase family.

It participates in secondary metabolite biosynthesis; terpenoid biosynthesis. Functionally, prenyltransferase; part of the gene cluster that mediates the biosynthesis of the phthalide-terpenoid hybrid 11'-O-desmethylfendlerol. Within the pathway, mfmD is responsible for farnesylation of the cyclopolic acid intermediate via an O-prenylation reaction. The biosynthesis of 11'-O-desmethylfendlerol begins with the NR-PKS mfmB that forms 3,5-dimethylorsellinic acid (DMOA), which is then transformed into the phthalide 5,7-dihydroxy-4-(hydroxymethyl)-6-methylphthalide by the cytochrome P450 monooxygenase mfmA and the hydrolase mfmC. Subsequently, the methyltransferase mfmE catalyzes 7-O-methylation to yield 5-hydroxy-4-(hydroxymethyl)-7-methoxy-6-methylphthalide, which undergoes C-3 hydroxylation by the cytochrome P450 monooxygenase mfmF. The resultant cyclopolic acid (2,5-dihydroxy-4-(hydroxymethyl)-7-methoxy-6-methylphthalide) is then farnesylated by the DMATS-type prenyltransferase mfmD to afford 5-O-farnesylcyclopolic acid. Finally, the Pyr4-family terpene cyclase mfmH cyclizes the farnesyl moiety of 5-O-farnesylcyclopolic acid into a drimane-like structure, thus completing the biosynthesis of 11'-O-desmethylfendlerol. This Annulohypoxylon moriforme (Filamentous fungus) protein is DMATS-type prenyltransferase mfmD.